The primary structure comprises 379 residues: UDP-4-amino-4-deoxy-L-arabinose--oxoglutarate aminotransferase (379 aa).

The residue at position 182 (K182) is an N6-(pyridoxal phosphate)lysine.

It belongs to the DegT/DnrJ/EryC1 family. ArnB subfamily. Homodimer. The cofactor is pyridoxal 5'-phosphate.

The enzyme catalyses UDP-4-amino-4-deoxy-beta-L-arabinose + 2-oxoglutarate = UDP-beta-L-threo-pentopyranos-4-ulose + L-glutamate. It participates in nucleotide-sugar biosynthesis; UDP-4-deoxy-4-formamido-beta-L-arabinose biosynthesis; UDP-4-deoxy-4-formamido-beta-L-arabinose from UDP-alpha-D-glucuronate: step 2/3. The protein operates within bacterial outer membrane biogenesis; lipopolysaccharide biosynthesis. In terms of biological role, catalyzes the conversion of UDP-4-keto-arabinose (UDP-Ara4O) to UDP-4-amino-4-deoxy-L-arabinose (UDP-L-Ara4N). The modified arabinose is attached to lipid A and is required for resistance to polymyxin and cationic antimicrobial peptides. In Escherichia coli O8 (strain IAI1), this protein is UDP-4-amino-4-deoxy-L-arabinose--oxoglutarate aminotransferase.